A 400-amino-acid chain; its full sequence is MASVKAVSSAAPLALRIVAECPVSKARACSLTLPHCAVNTPVFMPVGTQGTMKGITADQLEDLDCQICLGNTYHLGMRPGPDLIEKANGLHGFMKWRRNLLTDSGGFQMVSLVELSEVTEEGVTFRSPYDGKEILLTPEQSIAIQNSLGSDIMMQLDDVVSSTVKGPRVEEAMHRSVRWLDRCIAANKNPDRQNLFAIIQGGLDAELRKACLKEMTKRDVPGFAIGGLGGGEEKDDFWKMVTLSTDHLPREKPRYLMGVGYAVDLVVCVALGCDMFDCVFPTRTARFGSALVPWGSLQLKQKQYAKDFQPIDPDCQCPTCRRHSRAYLHALFKSDTAAMHHITIHNISYQLSLMRSVRQSIIDQRFPEFVKEFMKRMFPSSSQYPSWAVEALQSVNICLS.

The active-site Proton acceptor is D103. Queuine-binding positions include 103 to 107 (DSGGF), D157, Q200, and G227. The tract at residues 258-264 (GVGYAVD) is RNA binding. D277 acts as the Nucleophile in catalysis. Positions 282-286 (TRTAR) are RNA binding; important for wobble base 34 recognition. Zn(2+)-binding residues include C315, C317, C320, and H345.

Belongs to the queuine tRNA-ribosyltransferase family. Heterodimer of a catalytic subunit qtrt1 and an accessory subunit qtrt2. The cofactor is Zn(2+).

It is found in the cytoplasm. Its subcellular location is the mitochondrion outer membrane. It catalyses the reaction guanosine(34) in tRNA + queuine = queuosine(34) in tRNA + guanine. Catalytic subunit of the queuine tRNA-ribosyltransferase (TGT) that catalyzes the base-exchange of a guanine (G) residue with queuine (Q) at position 34 (anticodon wobble position) in tRNAs with GU(N) anticodons (tRNA-Asp, -Asn, -His and -Tyr), resulting in the hypermodified nucleoside queuosine (7-(((4,5-cis-dihydroxy-2-cyclopenten-1-yl)amino)methyl)-7-deazaguanosine). Catalysis occurs through a double-displacement mechanism. The nucleophile active site attacks the C1' of nucleotide 34 to detach the guanine base from the RNA, forming a covalent enzyme-RNA intermediate. The proton acceptor active site deprotonates the incoming queuine, allowing a nucleophilic attack on the C1' of the ribose to form the product. This Danio rerio (Zebrafish) protein is Queuine tRNA-ribosyltransferase catalytic subunit 1.